Consider the following 315-residue polypeptide: Methionyl-tRNA formyltransferase (315 aa).

Serine 113 to proline 116 is a binding site for (6S)-5,6,7,8-tetrahydrofolate.

Belongs to the Fmt family.

The catalysed reaction is L-methionyl-tRNA(fMet) + (6R)-10-formyltetrahydrofolate = N-formyl-L-methionyl-tRNA(fMet) + (6S)-5,6,7,8-tetrahydrofolate + H(+). Attaches a formyl group to the free amino group of methionyl-tRNA(fMet). The formyl group appears to play a dual role in the initiator identity of N-formylmethionyl-tRNA by promoting its recognition by IF2 and preventing the misappropriation of this tRNA by the elongation apparatus. In Salmonella dublin (strain CT_02021853), this protein is Methionyl-tRNA formyltransferase.